Reading from the N-terminus, the 289-residue chain is NADPH-dependent 7-cyano-7-deazaguanine reductase (289 aa).

81-83 (IES) contacts substrate. 83–84 (SK) lines the NADPH pocket. Cysteine 196 serves as the catalytic Thioimide intermediate. Aspartate 203 acts as the Proton donor in catalysis. Residue 235 to 236 (HE) coordinates substrate. An NADPH-binding site is contributed by 264–265 (RG).

This sequence belongs to the GTP cyclohydrolase I family. QueF type 2 subfamily. In terms of assembly, homodimer.

It is found in the cytoplasm. It carries out the reaction 7-aminomethyl-7-carbaguanine + 2 NADP(+) = 7-cyano-7-deazaguanine + 2 NADPH + 3 H(+). Its pathway is tRNA modification; tRNA-queuosine biosynthesis. In terms of biological role, catalyzes the NADPH-dependent reduction of 7-cyano-7-deazaguanine (preQ0) to 7-aminomethyl-7-deazaguanine (preQ1). The polypeptide is NADPH-dependent 7-cyano-7-deazaguanine reductase (Albidiferax ferrireducens (strain ATCC BAA-621 / DSM 15236 / T118) (Rhodoferax ferrireducens)).